A 655-amino-acid polypeptide reads, in one-letter code: Ubiquilin-3 (655 aa).

The Ubiquitin-like domain maps to 22–98; sequence IKVTVKTPKD…LVIKRQHRAM (77 aa). Residues 102 to 124 are disordered; it reads CPAASVPTQGPSPGSLPQPSSIY. The segment covering 110–122 has biased composition (low complexity); the sequence is QGPSPGSLPQPSS. The 40-residue stretch at 194–233 folds into the STI1 domain; that stretch reads NPHMQQLIQHNPEIGHILNNPEIMRQTLEFLRNPAMMQEM. Disordered regions lie at residues 277–330, 364–399, and 412–447; these read PFAT…PDIR, ASAL…LPEE, and FLRY…LVSG. Over residues 279-290 the composition is skewed to low complexity; the sequence is ATATTDNATTTT. Positions 318-330 are enriched in basic and acidic residues; that stretch reads GRQDGDQDAPDIR. Low complexity predominate over residues 377–395; it reads VNRVPPSSPSSQEPGSGQP. The span at 432–441 shows a compositional bias: polar residues; that stretch reads KSSTGHSTNL. One can recognise a UBA domain in the interval 609 to 655; the sequence is QLQPEAHFQVQLEQLRSMGFLNREANLQALIATGGDVDAAVEKLRQS.

As to expression, testis specific.

In Homo sapiens (Human), this protein is Ubiquilin-3 (UBQLN3).